Here is a 359-residue protein sequence, read N- to C-terminus: UbiA prenyltransferase domain-containing protein 1 homolog (359 aa).

Residues 1 to 16 (MATSSQLLPNGNLSRN) are compositionally biased toward polar residues. The tract at residues 1–23 (MATSSQLLPNGNLSRNGKTKTED) is disordered. 8 helical membrane passes run 67–89 (ALRP…LAYR), 98–118 (LATF…GNVV), 148–168 (VVSL…LLAV), 177–197 (LALI…GIGF), 200–220 (IALG…LFAF), 262–284 (IVTL…LLFA), 289–311 (FFIF…PQAF), and 335–355 (FFFG…PTFG).

Belongs to the UbiA prenyltransferase family.

It localises to the mitochondrion membrane. It participates in quinol/quinone metabolism; menaquinone biosynthesis. Functionally, prenyltransferase that mediates the formation of menaquinone-4 (MK-4), a vitamin K2 isoform, thereby acting as a mitochondrial electron carrier. Mediates the conversion of phylloquinone (PK) into MK-4, probably by cleaving the side chain of phylloquinone (PK) to release 2-methyl-1,4-naphthoquinone (menadione; K3) and then prenylating it with geranylgeranyl pyrophosphate (GGPP) to form MK-4. MK-4 acts as a membrane electron carrier downstream of a electron transport chain complex, improving mitochondrial oxygen consumption. This Drosophila melanogaster (Fruit fly) protein is UbiA prenyltransferase domain-containing protein 1 homolog (heix).